We begin with the raw amino-acid sequence, 337 residues long: Transaldolase (337 aa).

The Nuclear localization signal motif lies at 1–10; that stretch reads MSGSPVKRQR. K115 carries the N6-acetyllysine modification. The active-site Schiff-base intermediate with substrate is K142. N6-acetyllysine is present on K219. A phosphoserine mark is found at S237 and S256. N6-acetyllysine is present on residues K269, K286, and K321.

Belongs to the transaldolase family. Type 1 subfamily. Homodimer. Interacts with KPNA1 and KPNA4.

The protein localises to the nucleus. The protein resides in the cytoplasm. It carries out the reaction D-sedoheptulose 7-phosphate + D-glyceraldehyde 3-phosphate = D-erythrose 4-phosphate + beta-D-fructose 6-phosphate. The protein operates within carbohydrate degradation; pentose phosphate pathway; D-glyceraldehyde 3-phosphate and beta-D-fructose 6-phosphate from D-ribose 5-phosphate and D-xylulose 5-phosphate (non-oxidative stage): step 2/3. Its function is as follows. Catalyzes the rate-limiting step of the non-oxidative phase in the pentose phosphate pathway. Catalyzes the reversible conversion of sedheptulose-7-phosphate and D-glyceraldehyde 3-phosphate into erythrose-4-phosphate and beta-D-fructose 6-phosphate. In Rattus norvegicus (Rat), this protein is Transaldolase (Taldo1).